Consider the following 460-residue polypeptide: MAGYLSESDFVMVEEGFSTRDLLKELTLGASQATTDEVAAFFVADLGAIVRKHFCFLKCLPRVRPFYAVKCNSSPGVLKVLAQLGLGFSCANKAEMELVQHIGIPASKIICANPCKQIAQIKYAAKHGIQLLSFDNEMELAKVVKSHPSAKMVLCIATDDSHSLSCLSLKFGVSLKSCRHLLENAKKHHVEVVGVSFHIGSGCPDPQAYAQSIADARLVFEMGTELGHKMHVLDLGGGFPGTEGAKVRFEEIASVINSALDLYFPEGCGVDIFAELGRYYVTSAFTVAVSIIAKKEVLLDQPGREEENGSTSKTIVYHLDEGVYGIFNSVLFDNICPTPILQKKPSTEQPLYSSSLWGPAVDGCDCVAEGLWLPQLHVGDWLVFDNMGAYTVGMGSPFWGTQACHITYAMSRVAWEALRRQLMAAEQEDDVEGVCKPLSCGWEITDTLCVGPVFTPASIM.

A necessary for polyamine uptake stimulation region spans residues 117-140; sequence QIAQIKYAAKHGIQLLSFDNEMEL.

It belongs to the Orn/Lys/Arg decarboxylase class-II family. ODC antizyme inhibitor subfamily. In terms of assembly, monomer. Interacts with OAZ1, OAZ2 and OAZ3; this interaction disrupts the interaction between the antizyme and ODC1. Does not form a heterodimer with ODC1. Post-translationally, ubiquitinated, leading to its proteasomal degradation; a process that is reduced in presence of antizymes. May also be degraded through the lysosomal degradative pathway in a proteasomal-independent manner. In terms of tissue distribution, expressed in the neocortex, thalamus, hippocampus, cerebellum, medulla oblongata, gray and white matter. Expressed in neurons, oligodendrocytes, basket, Purkinje and pyramidal cells. Expressed in spermatocytes and Leydig cells of the testis. Expressed in luteal theca cells lining corpus luteum cysts and in hilus cells of the ovary. Expressed in primary and neoplastic mast cells (MC) (at protein level). Highly expressed in brain. Also expressed in testis.

The protein resides in the nucleus. Its subcellular location is the cytoplasm. It localises to the perinuclear region. The protein localises to the membrane. It is found in the cytoplasmic vesicle. The protein resides in the endoplasmic reticulum-Golgi intermediate compartment. Its subcellular location is the golgi apparatus. It localises to the cis-Golgi network. The protein localises to the trans-Golgi network. It is found in the cytoplasmic granule. The protein resides in the cell projection. Its subcellular location is the axon. It localises to the dendrite. The protein localises to the perikaryon. In terms of biological role, antizyme inhibitor (AZI) protein that positively regulates ornithine decarboxylase (ODC) activity and polyamine uptake. AZI is an enzymatically inactive ODC homolog that counteracts the negative effect of ODC antizymes (AZs) OAZ1, OAZ2 and OAZ3 on ODC activity by competing with ODC for antizyme-binding. Inhibits antizyme-dependent ODC degradation and releases ODC monomers from their inactive complex with antizymes, leading to formation of the catalytically active ODC homodimer and restoring polyamine production. Participates in the morphological integrity of the trans-Golgi network (TGN) and functions as a regulator of intracellular secretory vesicle trafficking. The polypeptide is Antizyme inhibitor 2 (AZIN2) (Homo sapiens (Human)).